We begin with the raw amino-acid sequence, 369 residues long: Coproporphyrin III ferrochelatase (369 aa).

Residues Ser-61 and Tyr-130 each contribute to the Fe-coproporphyrin III site. Residues His-197 and Glu-286 each contribute to the Fe(2+) site.

Belongs to the ferrochelatase family.

The protein localises to the cytoplasm. It carries out the reaction Fe-coproporphyrin III + 2 H(+) = coproporphyrin III + Fe(2+). Its pathway is porphyrin-containing compound metabolism; protoheme biosynthesis. In terms of biological role, involved in coproporphyrin-dependent heme b biosynthesis. Catalyzes the insertion of ferrous iron into coproporphyrin III to form Fe-coproporphyrin III. The polypeptide is Coproporphyrin III ferrochelatase (Corynebacterium diphtheriae (strain ATCC 700971 / NCTC 13129 / Biotype gravis)).